The primary structure comprises 455 residues: tRNA modification GTPase MnmE (455 aa).

Lys29, Glu91, and Arg131 together coordinate (6S)-5-formyl-5,6,7,8-tetrahydrofolate. Residues 226-378 (GLKVALVGLP…LIQELLKLAG (153 aa)) form the TrmE-type G domain. Asn236 lines the K(+) pocket. Residues 236 to 241 (NVGKSS), 255 to 261 (TDLPGTT), 280 to 283 (DTAG), and 341 to 344 (NKAD) contribute to the GTP site. Ser240 lines the Mg(2+) pocket. K(+) is bound by residues Thr255, Leu257, and Thr260. Mg(2+) is bound at residue Thr261. Residue Lys455 coordinates (6S)-5-formyl-5,6,7,8-tetrahydrofolate.

It belongs to the TRAFAC class TrmE-Era-EngA-EngB-Septin-like GTPase superfamily. TrmE GTPase family. In terms of assembly, homodimer. Heterotetramer of two MnmE and two MnmG subunits. The cofactor is K(+).

It is found in the cytoplasm. Functionally, exhibits a very high intrinsic GTPase hydrolysis rate. Involved in the addition of a carboxymethylaminomethyl (cmnm) group at the wobble position (U34) of certain tRNAs, forming tRNA-cmnm(5)s(2)U34. This Prochlorococcus marinus (strain SARG / CCMP1375 / SS120) protein is tRNA modification GTPase MnmE.